The chain runs to 201 residues: Imidazole glycerol phosphate synthase subunit HisH (201 aa).

A Glutamine amidotransferase type-1 domain is found at 2 to 201 (KVVILDTGCA…ARLLKNFLEM (200 aa)). The active-site Nucleophile is cysteine 77. Catalysis depends on residues histidine 183 and glutamate 185.

As to quaternary structure, heterodimer of HisH and HisF.

It localises to the cytoplasm. It catalyses the reaction 5-[(5-phospho-1-deoxy-D-ribulos-1-ylimino)methylamino]-1-(5-phospho-beta-D-ribosyl)imidazole-4-carboxamide + L-glutamine = D-erythro-1-(imidazol-4-yl)glycerol 3-phosphate + 5-amino-1-(5-phospho-beta-D-ribosyl)imidazole-4-carboxamide + L-glutamate + H(+). The catalysed reaction is L-glutamine + H2O = L-glutamate + NH4(+). The protein operates within amino-acid biosynthesis; L-histidine biosynthesis; L-histidine from 5-phospho-alpha-D-ribose 1-diphosphate: step 5/9. Functionally, IGPS catalyzes the conversion of PRFAR and glutamine to IGP, AICAR and glutamate. The HisH subunit catalyzes the hydrolysis of glutamine to glutamate and ammonia as part of the synthesis of IGP and AICAR. The resulting ammonia molecule is channeled to the active site of HisF. In Photorhabdus laumondii subsp. laumondii (strain DSM 15139 / CIP 105565 / TT01) (Photorhabdus luminescens subsp. laumondii), this protein is Imidazole glycerol phosphate synthase subunit HisH.